Reading from the N-terminus, the 622-residue chain is Vacuolar protein sorting-associated protein 27 (622 aa).

Residues 18–149 form the VHS domain; the sequence is SESIPNGDLD…KLISRGIKFP (132 aa). Residue serine 157 is modified to Phosphoserine. Residues 170-230 form an FYVE-type; atypical zinc finger; the sequence is WIDSDACMIC…VCDSCFEDYD (61 aa). Residues cysteine 176, cysteine 179, cysteine 192, cysteine 195, cysteine 200, histidine 203, cysteine 222, and cysteine 225 each coordinate Zn(2+). Residues 236 to 260 form a disordered region; the sequence is DSKKSKKHRHKRKKDRDYSTPEDEE. Over residues 239–249 the composition is skewed to basic residues; it reads KSKKHRHKRKK. A UIM 1 domain is found at 258 to 277; the sequence is DEEELIRKAIELSLKESRNS. Residue lysine 294 forms a Glycyl lysine isopeptide (Lys-Gly) (interchain with G-Cter in ubiquitin) linkage. The region spanning 301–320 is the UIM 2 domain; it reads EEDPDLKAAIQESLREAEEA. The segment covering 317-328 has biased composition (basic and acidic residues); that stretch reads AEEAKLRSERQK. Disordered regions lie at residues 317–348 and 462–622; these read AEEAKLRSERQKASRQMQPQQPSPQPQPIHSV and AESY…LIEL. Over residues 462–500 the composition is skewed to polar residues; it reads AESYQTPPLQQLSSHQYKPQQDVSRQQSVKANSSPTTNI. Serine 495 is modified (phosphoserine). Acidic residues predominate over residues 533 to 548; that stretch reads EAEDEGTQAVQDEESS. A Phosphoserine modification is found at serine 613.

The protein belongs to the VPS27 family. As to quaternary structure, component of the ESCRT-0 complex composed of HSE1 and VPS27. Interacts with ENT3 and ENT5, the ESCRT-I subunits VPS23 and VPS28 and with the COPIb subunits SEC27, SEC28 and SEC33. May form a complex composed of VPS27, HSE1 and DOA1. Interacts with DOA1. Interacts with ubiquitin.

It is found in the endosome membrane. In terms of biological role, component of the ESCRT-0 complex which is the sorting receptor for ubiquitinated cargo proteins at the multivesicular body (MVB) and recruits ESCRT-I to the MVB outer membrane. Controls exit from the prevacuolar compartment (PVC) in both the forward direction to the vacuole and the return to the Golgi. Allows VPS10 to return to the (trans-Golgi network) TGN from the PVC. Might also function as an alternate adapter in the COPIb clathrin-like coat. In Saccharomyces cerevisiae (strain ATCC 204508 / S288c) (Baker's yeast), this protein is Vacuolar protein sorting-associated protein 27 (VPS27).